We begin with the raw amino-acid sequence, 120 residues long: U13-lycotoxin-Ls1f (120 aa).

The signal sequence occupies residues 1–16 (MKILFVLISILYAVYC). Positions 17-54 (FSSEEDVDSAYLANELEPVEDINSEQYAALEPKEEQER) are excised as a propeptide. 4 disulfides stabilise this stretch: Cys-56/Cys-70, Cys-63/Cys-76, Cys-69/Cys-87, and Cys-78/Cys-85. One can recognise an Agouti domain in the interval 56-95 (CAGMGQDCKDDCDCCLNIATCNCWFGRYFCSCTFGDYQTC).

The protein belongs to the neurotoxin 05 (agouti) family. Post-translationally, contains 6 disulfide bonds. As to expression, expressed by the venom gland.

It localises to the secreted. The polypeptide is U13-lycotoxin-Ls1f (Lycosa singoriensis (Wolf spider)).